The sequence spans 142 residues: Deoxyuridine 5'-triphosphate nucleotidohydrolase (142 aa).

Residues 62-64 (RSG), Asn75, and 79-81 (TID) each bind substrate.

It belongs to the dUTPase family. Mg(2+) serves as cofactor.

The enzyme catalyses dUTP + H2O = dUMP + diphosphate + H(+). It functions in the pathway pyrimidine metabolism; dUMP biosynthesis; dUMP from dCTP (dUTP route): step 2/2. In terms of biological role, this enzyme is involved in nucleotide metabolism: it produces dUMP, the immediate precursor of thymidine nucleotides and it decreases the intracellular concentration of dUTP so that uracil cannot be incorporated into DNA. The sequence is that of Deoxyuridine 5'-triphosphate nucleotidohydrolase from Picosynechococcus sp. (strain ATCC 27264 / PCC 7002 / PR-6) (Agmenellum quadruplicatum).